Here is a 175-residue protein sequence, read N- to C-terminus: MSIENLKEALPEYAKDLKLNLGTVARGTVLSQSQLWGTLVATAAATRNEQVFKEIREEAAGILTPEALDAALGAASIMAMTNVFYRGRGFLDGAYDDLRPGLRMNIIGNPGVDKSEFELWSFAVSTINGCHYCVGSHEKVLREAGLTREQVLEALKIAAIVAGVAQALATVPALV.

The active-site Proton donor is cysteine 130. The cysteines at positions 130 and 133 are disulfide-linked. Cysteine 133 serves as the catalytic Cysteine sulfenic acid (-SOH) intermediate.

This sequence belongs to the AhpD family. In terms of assembly, homotrimer.

It carries out the reaction N(6)-[(R)-dihydrolipoyl]-L-lysyl-[lipoyl-carrier protein] + a hydroperoxide = N(6)-[(R)-lipoyl]-L-lysyl-[lipoyl-carrier protein] + an alcohol + H2O. Functionally, antioxidant protein with alkyl hydroperoxidase activity. Required for the reduction of the AhpC active site cysteine residues and for the regeneration of the AhpC enzyme activity. The sequence is that of Alkyl hydroperoxide reductase AhpD from Mycobacteroides abscessus (strain ATCC 19977 / DSM 44196 / CCUG 20993 / CIP 104536 / JCM 13569 / NCTC 13031 / TMC 1543 / L948) (Mycobacterium abscessus).